Reading from the N-terminus, the 862-residue chain is Probable inorganic carbon transporter subunit DabA (862 aa).

C365, D367, H540, and C555 together coordinate Zn(2+).

Belongs to the inorganic carbon transporter (TC 9.A.2) DabA family. As to quaternary structure, forms a complex with DabB. Zn(2+) serves as cofactor.

The protein localises to the cell inner membrane. Functionally, part of an energy-coupled inorganic carbon pump. This is Probable inorganic carbon transporter subunit DabA from Vibrio cholerae serotype O1 (strain ATCC 39315 / El Tor Inaba N16961).